Consider the following 375-residue polypeptide: Alcohol dehydrogenase 1 (375 aa).

Ser-2 bears the N-acetylserine mark. 7 residues coordinate Zn(2+): Cys-47, His-68, Cys-98, Cys-101, Cys-104, Cys-112, and Cys-175. NAD(+) is bound by residues 200–205 (GLGGVG), Asp-224, Lys-229, 293–295 (LGV), and Arg-370.

This sequence belongs to the zinc-containing alcohol dehydrogenase family. Class-I subfamily. In terms of assembly, homodimer. It depends on Zn(2+) as a cofactor.

Its subcellular location is the cytoplasm. It carries out the reaction a primary alcohol + NAD(+) = an aldehyde + NADH + H(+). It catalyses the reaction a secondary alcohol + NAD(+) = a ketone + NADH + H(+). The polypeptide is Alcohol dehydrogenase 1 (ADH1) (Apteryx australis (Southern brown kiwi)).